The following is a 107-amino-acid chain: U1-lycotoxin-Ls1s (107 aa).

The N-terminal stretch at 1-20 (MMKVLVVVALLVTLISYSSS) is a signal peptide. Positions 21–41 (EGIDDLEADELLSLMANEQTR) are excised as a propeptide. 4 disulfide bridges follow: Cys-44/Cys-59, Cys-51/Cys-68, Cys-58/Cys-86, and Cys-70/Cys-84.

This sequence belongs to the neurotoxin 19 (CSTX) family. 04 (U1-Lctx) subfamily. In terms of tissue distribution, expressed by the venom gland.

Its subcellular location is the secreted. In Lycosa singoriensis (Wolf spider), this protein is U1-lycotoxin-Ls1s.